Reading from the N-terminus, the 330-residue chain is Replication factor C small subunit (330 aa).

48–55 is an ATP binding site; it reads GPPGTGKT.

This sequence belongs to the activator 1 small subunits family. RfcS subfamily. Heteropentamer composed of four small subunits (RfcS) and one large subunit (RfcL). A homotetramer of this subunit interacts with PCNA heterodimer PCNA1-PCNA2.

In terms of biological role, part of the RFC clamp loader complex which loads the PCNA sliding clamp onto DNA. The complex possesses DNA-dependent ATPase activity. In Saccharolobus solfataricus (strain ATCC 35092 / DSM 1617 / JCM 11322 / P2) (Sulfolobus solfataricus), this protein is Replication factor C small subunit (rfcS).